We begin with the raw amino-acid sequence, 140 residues long: Putative pre-16S rRNA nuclease (140 aa).

Belongs to the YqgF nuclease family.

It is found in the cytoplasm. In terms of biological role, could be a nuclease involved in processing of the 5'-end of pre-16S rRNA. This is Putative pre-16S rRNA nuclease from Mannheimia succiniciproducens (strain KCTC 0769BP / MBEL55E).